A 406-amino-acid chain; its full sequence is Tryptophan 2,3-dioxygenase (406 aa).

Substrate contacts are provided by residues 72–76 (FIVTH) and R144. H328 contributes to the heme binding site. T342 contacts substrate.

Belongs to the tryptophan 2,3-dioxygenase family. In terms of assembly, homotetramer. Dimer of dimers. Requires heme as cofactor.

It carries out the reaction L-tryptophan + O2 = N-formyl-L-kynurenine. The protein operates within amino-acid degradation; L-tryptophan degradation via kynurenine pathway; L-kynurenine from L-tryptophan: step 1/2. Heme-dependent dioxygenase that catalyzes the oxidative cleavage of the L-tryptophan (L-Trp) pyrrole ring and converts L-tryptophan to N-formyl-L-kynurenine. Catalyzes the oxidative cleavage of the indole moiety. In Xenopus laevis (African clawed frog), this protein is Tryptophan 2,3-dioxygenase.